The sequence spans 217 residues: Putative thymidylate synthase (217 aa).

Residue Cys139 is part of the active site.

The protein belongs to the thymidylate synthase family. Archaeal-type ThyA subfamily. Monomer.

Its subcellular location is the cytoplasm. Its pathway is pyrimidine metabolism; dTTP biosynthesis. Its function is as follows. May catalyze the biosynthesis of dTMP using an unknown cosubstrate. The sequence is that of Putative thymidylate synthase from Methanococcoides burtonii (strain DSM 6242 / NBRC 107633 / OCM 468 / ACE-M).